A 319-amino-acid chain; its full sequence is Ribonucleoside-diphosphate reductase small chain (319 aa).

An interaction with R1 region spans residues 313-319; the sequence is FSLDVDF.

Belongs to the ribonucleoside diphosphate reductase small chain family. Interacts with RNR1/OPG080 subunit. Can interact with host RNR1 supunit. Requires Fe cation as cofactor.

The enzyme catalyses a 2'-deoxyribonucleoside 5'-diphosphate + [thioredoxin]-disulfide + H2O = a ribonucleoside 5'-diphosphate + [thioredoxin]-dithiol. In terms of biological role, ribonucleoside-diphosphate reductase holoenzyme provides the precursors necessary for viral DNA synthesis. Allows virus growth in non-dividing cells. Catalyzes the biosynthesis of deoxyribonucleotides from the corresponding ribonucleotides. The sequence is that of Ribonucleoside-diphosphate reductase small chain (OPG048) from Cynomys gunnisoni (Gunnison's prairie dog).